Here is a 153-residue protein sequence, read N- to C-terminus: Large ribosomal subunit protein uL15 (153 aa).

The tract at residues 21 to 41 is disordered; it reads RGIGSGKGKTGGRGIKGQKSR. Gly residues predominate over residues 23–35; that stretch reads IGSGKGKTGGRGI.

The protein belongs to the universal ribosomal protein uL15 family. As to quaternary structure, part of the 50S ribosomal subunit.

Binds to the 23S rRNA. The polypeptide is Large ribosomal subunit protein uL15 (Rickettsia massiliae (strain Mtu5)).